The chain runs to 795 residues: Protein translocase subunit SecA 2 (795 aa).

ATP is bound by residues Gln84, 102 to 106 (GEGKT), and Asp496.

The protein belongs to the SecA family. Monomer and homodimer. Part of the essential Sec protein translocation apparatus which comprises SecA, SecYEG and auxiliary proteins SecDF. Other proteins may also be involved.

The protein localises to the cell membrane. It is found in the cytoplasm. The enzyme catalyses ATP + H2O + cellular proteinSide 1 = ADP + phosphate + cellular proteinSide 2.. Part of the Sec protein translocase complex. Interacts with the SecYEG preprotein conducting channel. Has a central role in coupling the hydrolysis of ATP to the transfer of proteins into and across the cell membrane, serving as an ATP-driven molecular motor driving the stepwise translocation of polypeptide chains across the membrane. The sequence is that of Protein translocase subunit SecA 2 from Streptococcus agalactiae serotype V (strain ATCC BAA-611 / 2603 V/R).